We begin with the raw amino-acid sequence, 1033 residues long: Tyrosine-protein kinase-like otk (1033 aa).

The N-terminal stretch at 1-22 is a signal peptide; that stretch reads MTARMISICGLVMALMMASVLA. At 23–581 the chain is on the extracellular side; that stretch reads SSSRFQRVPQ…GGDGFLVTRA (559 aa). 5 Ig-like C2-type domains span residues 25–114, 113–199, 251–365, 368–463, and 468–558; these read SRFQ…AKLS, LSVI…RVMS, PEDL…APIN, PGIL…VAIN, and PKFS…VQLV. Asn-39 carries N-linked (GlcNAc...) asparagine glycosylation. Disulfide bonds link Cys-46–Cys-95, Cys-137–Cys-188, Cys-276–Cys-354, and Cys-399–Cys-447. Residues Asn-336, Asn-417, Asn-429, Asn-444, Asn-457, Asn-512, and Asn-524 are each glycosylated (N-linked (GlcNAc...) asparagine). Residues Cys-490 and Cys-542 are joined by a disulfide bond. The helical transmembrane segment at 582–602 threads the bilayer; it reads VLITMTVALAYIVLVVGLMLW. At 603–1033 the chain is on the cytoplasmic side; the sequence is CRYRRQARKA…LSKAMQSAEK (431 aa). Disordered regions lie at residues 617–679 and 718–760; these read LSTK…KKSA and SPSD…KTSM. Over residues 655–673 the composition is skewed to polar residues; it reads KSSGDAQKSDDTACSQQSR. At Ser-678 the chain carries Phosphoserine. A Protein kinase; inactive domain is found at 692 to 1028; that stretch reads LSELIQIGRG…QLGAALSKAM (337 aa). Residues 720-731 are compositionally biased toward basic and acidic residues; sequence SDKDADTEKQHS.

Belongs to the protein kinase superfamily. Tyr protein kinase family. Insulin receptor subfamily. As to quaternary structure, interacts with plexA; component of a receptor complex that mediates the repulsive signaling in response to Semaphorin ligands. In terms of tissue distribution, dynamically expressed during embryogenesis in several areas of the developing nervous system, including neurons and fasciculating axons. Expression in stage 7 embryos is seen in the anterior midgut primordia, cephalic furrow and along the germinal band. At stage 11, expression is in 15 stripes over the trunk region, and in the anterior and posterior midgut primordia. Stage 12 shows expression in the developing nervous system, procephalic lobe and maxillar bud. Stage 13 shows expression in the ventral cord, maxillar segment and in three regions of the gut. At stage 16 expression is preferentially detected throughout the nervous system, including the neuromers in the ventral cord and the supraesophageal ganglion (at protein level). In larva, expression is seen in developing R cells and is localized predominantly to R1-R6 growth cones.

It is found in the cell membrane. Acts as a calcium-dependent, homophilic cell adhesion molecule that regulates neural recognition during the development of the nervous system. Component of the repulsive Plexin signaling response to regulate motor axon guidance at the embryonic stage. Also component of a receptor complex that is required in the adult visual system to innervate the lamina layer; specific targeting of R1-R6 axons. The polypeptide is Tyrosine-protein kinase-like otk (Drosophila melanogaster (Fruit fly)).